The following is a 242-amino-acid chain: UPF0309 protein BSUIS_B0903 (242 aa).

The SIS domain maps to 30–214 (AADLIAAAAR…ARLVGEGDAP (185 aa)).

The protein belongs to the UPF0309 family.

The protein is UPF0309 protein BSUIS_B0903 of Brucella suis (strain ATCC 23445 / NCTC 10510).